Reading from the N-terminus, the 341-residue chain is Aspartate carbamoyltransferase catalytic subunit (341 aa).

Arg-74 and Thr-75 together coordinate carbamoyl phosphate. Residue Lys-102 coordinates L-aspartate. Positions 124, 152, and 155 each coordinate carbamoyl phosphate. L-aspartate is bound by residues Arg-190 and Arg-244. Carbamoyl phosphate contacts are provided by Gly-285 and Pro-286.

It belongs to the aspartate/ornithine carbamoyltransferase superfamily. ATCase family. Heterododecamer (2C3:3R2) of six catalytic PyrB chains organized as two trimers (C3), and six regulatory PyrI chains organized as three dimers (R2).

It carries out the reaction carbamoyl phosphate + L-aspartate = N-carbamoyl-L-aspartate + phosphate + H(+). The protein operates within pyrimidine metabolism; UMP biosynthesis via de novo pathway; (S)-dihydroorotate from bicarbonate: step 2/3. In terms of biological role, catalyzes the condensation of carbamoyl phosphate and aspartate to form carbamoyl aspartate and inorganic phosphate, the committed step in the de novo pyrimidine nucleotide biosynthesis pathway. The polypeptide is Aspartate carbamoyltransferase catalytic subunit (Novosphingobium aromaticivorans (strain ATCC 700278 / DSM 12444 / CCUG 56034 / CIP 105152 / NBRC 16084 / F199)).